A 152-amino-acid polypeptide reads, in one-letter code: Arginine repressor (152 aa).

This sequence belongs to the ArgR family.

It localises to the cytoplasm. It participates in amino-acid biosynthesis; L-arginine biosynthesis [regulation]. Regulates arginine biosynthesis genes. This Thermotoga sp. (strain RQ2) protein is Arginine repressor.